An 873-amino-acid polypeptide reads, in one-letter code: MTAQPPLHHRHHPYTLFGTSCHLSWYGLLEASVPIVQCLFLDLGGGRAEPRLHTFVVRGDRLPPAEVRAVHRASYAALASAVTTDADERRRGLEQRSAVLARVLLEGSALIRVLARTFTPVQIQTDASGVEILEAAPALGVETAALSNALSLFHVAKLVVIGSYPEVHEPRVVTHTAERVSEEYGTHAHKKLRRGYYAYDLAMSFRVGTHKYVLERDDEAVLARLFEVREVCFLRTCLRLVTPVGFVAVAVTDEQCCLLLQSAWTHLYDVLFRGFAGQPPLRDYLGPDLFETGAARSFFFPGFPPVPVYAVHGLHTLMRETALDAAAEVLSWCGLPDIVGSAGKLEVEPCALSLGVPEDEWQVFGTEAGGGAVRLNATAFRERPAGGDRRWLLPPLPRDDGDGENNVVEVSSSTGGAHPPSDDATFTVHVRDATLHRVLIVDLVERVLAKCVRARDFNPYVRYSHRLHTYAVCEKFIENLRFRSRRAFWQIQSLLGYISEHVTSACASAGLLWVLSRGHREFYVYDGYSGHGPVSAEVCVRTVVDCYWRKLFGGDDPGPTCRVQESAPGVLLVWGDERLVGPFNFFYGNGGAGGSPLHGVVGGFAAGHCGGACCAGCVVTHRHSSGGGGSGVGDADHASGGGLDAAAGSGHNGGSDRVSPSTPPAALGGCCCAAGGDWLSAVGHVLGRLPALLRERVSVSELEAVYREILFRFVARRNDVDFWLLRFQPGENEVRPHAGVIDCAPFHGVWAEQGQIIVQSRDTALAADIGYGVYVDKAFAMLTACVEVWARELLSSSTASTTACSSSSVLSSALPSVTSSSSGTATVSPPSCSSSSATWLEERDEWVRSLAVDAQHAAKRVASEGLRFFRLNA.

A disordered region spans residues 394-422; that stretch reads PPLPRDDGDGENNVVEVSSSTGGAHPPSD.

This sequence belongs to the herpesviridae HEPA family. In terms of assembly, associates with the primase and the helicase to form the helicase-primase complex. Interacts with the origin-binding protein. Interacts with the polymerase catalytic subunit.

Its subcellular location is the host nucleus. Functionally, component of the helicase/primase complex. Unwinds the DNA at the replication forks and generates single-stranded DNA for both leading and lagging strand synthesis. The primase synthesizes short RNA primers on the lagging strand that the polymerase presumably elongates using dNTPs. The primase-associated factor has no known catalytic activity in the complex and may serve to facilitate the formation of the replisome by directly interacting with the origin-binding protein and the polymerase. This Homo sapiens (Human) protein is DNA helicase/primase complex-associated protein (UL102).